Reading from the N-terminus, the 426-residue chain is Alpha-ionylideneethane synthase abl3 (426 aa).

It belongs to the alpha-ionylideneethane synthase family.

It functions in the pathway hormone biosynthesis. In terms of biological role, alpha-ionylideneethane synthase; part of the gene cluster that mediates the biosynthesis of abscisic acid (ABA), a phytohormone that acts antagonistically toward salicylic acid (SA), jasmonic acid (JA) and ethylene (ETH) signaling, to impede plant defense responses. The first step of the pathway catalyzes the reaction from farnesyl diphosphate to alpha-ionylideneethane performed by the alpha-ionylideneethane synthase abl3 via a three-step reaction mechanism involving 2 neutral intermediates, beta-farnesene and allofarnesene. The cytochrome P450 monooxygenase abl1 might then be involved in the conversion of alpha-ionylideneethane to alpha-ionylideneacetic acid. Alpha-ionylideneacetic acid is further converted to abscisic acid in 2 steps involving the cytochrome P450 monooxygenase abl2 and the short-chain dehydrogenase/reductase abl4, via the intermediates 1'-deoxy-ABA or 1',4'-trans-diol-ABA, depending on the order of action of these 2 enzymes. Abl2 is responsible for the hydroxylation of carbon atom C-1' and abl4 might be involved in the oxidation of the C-4' carbon atom. In Leptosphaeria maculans (strain JN3 / isolate v23.1.3 / race Av1-4-5-6-7-8) (Blackleg fungus), this protein is Alpha-ionylideneethane synthase abl3.